An 860-amino-acid chain; its full sequence is Leucine--tRNA ligase (860 aa).

The 'HIGH' region signature appears at 42-52 (PYPSGRLHMGH). The 'KMSKS' region signature appears at 619 to 623 (KMSKS). Lysine 622 lines the ATP pocket.

The protein belongs to the class-I aminoacyl-tRNA synthetase family.

Its subcellular location is the cytoplasm. The catalysed reaction is tRNA(Leu) + L-leucine + ATP = L-leucyl-tRNA(Leu) + AMP + diphosphate. The sequence is that of Leucine--tRNA ligase from Pectobacterium atrosepticum (strain SCRI 1043 / ATCC BAA-672) (Erwinia carotovora subsp. atroseptica).